The following is a 313-amino-acid chain: Porphobilinogen deaminase (313 aa).

An S-(dipyrrolylmethanemethyl)cysteine modification is found at C242.

It belongs to the HMBS family. Monomer. Dipyrromethane serves as cofactor.

The catalysed reaction is 4 porphobilinogen + H2O = hydroxymethylbilane + 4 NH4(+). It functions in the pathway porphyrin-containing compound metabolism; protoporphyrin-IX biosynthesis; coproporphyrinogen-III from 5-aminolevulinate: step 2/4. Tetrapolymerization of the monopyrrole PBG into the hydroxymethylbilane pre-uroporphyrinogen in several discrete steps. The chain is Porphobilinogen deaminase from Pseudomonas fluorescens (strain ATCC BAA-477 / NRRL B-23932 / Pf-5).